Consider the following 357-residue polypeptide: Norreticuline-7-O-methyltransferase (357 aa).

Aspartate 225 is a binding site for S-adenosyl-L-methionine. Residue histidine 263 is the Proton acceptor of the active site.

The protein belongs to the class I-like SAM-binding methyltransferase superfamily. Cation-independent O-methyltransferase family. In terms of tissue distribution, expressed instems, leaves, roots and seedlings.

Its function is as follows. Involved in the biosynthesis of benzylisoquinoline alkaloids. Catalyzes specifically the methylation of norreticuline at position seven to produce norlaudanine. No activity with norcoclaurine, reticuline, norlaudanosoline, norisoorientaline, scoulerine, salutaridinol, oripavine, salsolinol, codeine or morphine. Involved in papaverine biosynthesis. The protein is Norreticuline-7-O-methyltransferase of Papaver somniferum (Opium poppy).